Consider the following 330-residue polypeptide: Small ribosomal subunit protein uS15m (330 aa).

The protein belongs to the universal ribosomal protein uS15 family. Component of the mitochondrial ribosome small subunit (28S) which comprises a 12S rRNA and about 30 distinct proteins.

It is found in the mitochondrion. This Caenorhabditis elegans protein is Small ribosomal subunit protein uS15m (mrps-15).